Here is a 295-residue protein sequence, read N- to C-terminus: Acetylglutamate kinase (295 aa).

Substrate-binding positions include 66 to 67 (GG), R88, and N193.

Belongs to the acetylglutamate kinase family. ArgB subfamily.

The protein localises to the cytoplasm. The enzyme catalyses N-acetyl-L-glutamate + ATP = N-acetyl-L-glutamyl 5-phosphate + ADP. Its pathway is amino-acid biosynthesis; L-arginine biosynthesis; N(2)-acetyl-L-ornithine from L-glutamate: step 2/4. Catalyzes the ATP-dependent phosphorylation of N-acetyl-L-glutamate. The chain is Acetylglutamate kinase from Rhizobium leguminosarum bv. trifolii (strain WSM2304).